Consider the following 465-residue polypeptide: Lysosomal dipeptide transporter MFSD1 (465 aa).

The interval 1–23 (MEEEDEEARALLAGGPDEADRGA) is disordered. The short motif at 11–12 (LL) is the Dileucine internalization motif element. The next 12 helical transmembrane spans lie at 39–59 (LVHRLLVLLLMCFLGFGSYFC), 83–103 (LLYAWYSWSNVVLCFFGGFLI), 113–133 (TIIFSCFVCIGQVVFALGGIF), 135–155 (AFWLMEFGRFVFGIGGESLAV), 170–191 (LNLVFGLQLSMARIGSTVNMNL), 213–233 (ITLMIGGVTCILSLICALALA), 266–286 (LWLIFIICVCYYVAVFPFIGL), 304–324 (AINSVVYVISAPMSPVFGLLV), 331–351 (IIWVLCAVAATLVSHMMLAFT), 361–381 (LLGLSYSLLACALWPMVAFVV), 392–412 (FMQSIQNLGLAIISIIAGMIL), and 418–438 (LFLEVFFIACVSLSLLSVVLL).

It belongs to the major facilitator superfamily. As to quaternary structure, homodimer. Interacts with lysosomal protein GLMP (via lumenal domain); the interaction starts while both proteins are still in the endoplasmic reticulum and is required for stabilization of MFSD1 in lysosomes but has no direct effect on its targeting to lysosomes or transporter activity.

It localises to the lysosome membrane. The catalysed reaction is L-alpha-aminoacyl-L-arginine(out) = L-alpha-aminoacyl-L-arginine(in). The enzyme catalyses L-arginyl-L-alpha-amino acid(out) = L-arginyl-L-alpha-amino acid(in). It carries out the reaction L-arginyl-glycine(out) = L-arginyl-glycine(in). It catalyses the reaction L-alpha-aminoacyl-L-lysine(out) = L-alpha-aminoacyl-L-lysine(in). The catalysed reaction is L-aspartyl-L-lysine(out) = L-aspartyl-L-lysine(in). The enzyme catalyses L-alanyl-L-lysine(out) = L-alanyl-L-lysine(in). It carries out the reaction L-lysyl-L-alpha-amino acid(out) = L-lysyl-L-alpha-amino acid(in). It catalyses the reaction L-lysyl-L-alanine(out) = L-lysyl-L-alanine(in). The catalysed reaction is L-lysyl-L-lysine(out) = L-lysyl-L-lysine(in). The enzyme catalyses L-lysyl-glycine(out) = L-lysyl-glycine(in). It carries out the reaction L-alpha-aminoacyl-L-histidine(out) = L-alpha-aminoacyl-L-histidine(in). It catalyses the reaction L-histidyl-L-alpha-amino acid(out) = L-histidyl-L-alpha-amino acid(in). The catalysed reaction is L-histidyl-glycine(out) = L-histidyl-glycine(in). Functionally, lysosomal dipeptide uniporter that selectively exports lysine, arginine or histidine-containing dipeptides with a net positive charge from the lysosome lumen into the cytosol. Could play a role in a specific type of protein O-glycosylation indirectly regulating macrophages migration and tissue invasion. Also essential for liver homeostasis. The chain is Lysosomal dipeptide transporter MFSD1 from Pongo abelii (Sumatran orangutan).